The chain runs to 141 residues: Nucleoside diphosphate kinase (141 aa).

Positions 11, 59, 87, 93, 104, and 114 each coordinate ATP. The Pros-phosphohistidine intermediate role is filled by H117.

It belongs to the NDK family. In terms of assembly, homotetramer. Requires Mg(2+) as cofactor.

The protein localises to the cytoplasm. It catalyses the reaction a 2'-deoxyribonucleoside 5'-diphosphate + ATP = a 2'-deoxyribonucleoside 5'-triphosphate + ADP. The catalysed reaction is a ribonucleoside 5'-diphosphate + ATP = a ribonucleoside 5'-triphosphate + ADP. In terms of biological role, major role in the synthesis of nucleoside triphosphates other than ATP. The ATP gamma phosphate is transferred to the NDP beta phosphate via a ping-pong mechanism, using a phosphorylated active-site intermediate. The polypeptide is Nucleoside diphosphate kinase (Variovorax paradoxus (strain S110)).